The sequence spans 263 residues: Indole-3-glycerol phosphate synthase (263 aa).

Belongs to the TrpC family.

The catalysed reaction is 1-(2-carboxyphenylamino)-1-deoxy-D-ribulose 5-phosphate + H(+) = (1S,2R)-1-C-(indol-3-yl)glycerol 3-phosphate + CO2 + H2O. The protein operates within amino-acid biosynthesis; L-tryptophan biosynthesis; L-tryptophan from chorismate: step 4/5. The protein is Indole-3-glycerol phosphate synthase of Desulfosudis oleivorans (strain DSM 6200 / JCM 39069 / Hxd3) (Desulfococcus oleovorans).